The primary structure comprises 209 residues: Mitochondrial import inner membrane translocase subunit Tim23 (209 aa).

A run of 3 helical transmembrane segments spans residues 73–93, 125–145, and 172–194; these read FELA…FGAM, ALWA…GVII, and GGLR…YALY.

The protein belongs to the Tim17/Tim22/Tim23 family. As to quaternary structure, component of the TIM23 complex at least composed of TIMM23, TIMM17 (TIMM17A or TIMM17B) and TIMM50; within this complex, directly interacts with TIMM50. The complex interacts with the TIMM44 component of the PAM complex and with DNAJC15. Upon mitochondrial depolarization, interacts with PINK1; the interaction is required for PINK1 accumulation at the outer mitochondrial membrane, kinase activation by autophosphorylation and PRKN recruitement to mitochondria.

Its subcellular location is the mitochondrion inner membrane. In terms of biological role, essential component of the TIM23 complex, a complex that mediates the translocation of transit peptide-containing proteins across the mitochondrial inner membrane. Has a role in the activation of stress-induced mitophagy by protecting PINK1 from OMA1-mediated degradation and facilitating its accumulation at the outer mitochondrial membrane in response to depolarization. This chain is Mitochondrial import inner membrane translocase subunit Tim23 (TIMM23), found in Bos taurus (Bovine).